A 354-amino-acid polypeptide reads, in one-letter code: 3-isopropylmalate dehydrogenase (354 aa).

74-87 (GPKWDDLPPEKRPE) is a binding site for NAD(+). Positions 95, 105, 134, and 219 each coordinate substrate. The Mg(2+) site is built by Asp219, Asp243, and Asp247. 275-287 (GSAPDIAGKNIAN) is a binding site for NAD(+).

It belongs to the isocitrate and isopropylmalate dehydrogenases family. LeuB type 1 subfamily. Homodimer. Requires Mg(2+) as cofactor. Mn(2+) is required as a cofactor.

It is found in the cytoplasm. It catalyses the reaction (2R,3S)-3-isopropylmalate + NAD(+) = 4-methyl-2-oxopentanoate + CO2 + NADH. It functions in the pathway amino-acid biosynthesis; L-leucine biosynthesis; L-leucine from 3-methyl-2-oxobutanoate: step 3/4. In terms of biological role, catalyzes the oxidation of 3-carboxy-2-hydroxy-4-methylpentanoate (3-isopropylmalate) to 3-carboxy-4-methyl-2-oxopentanoate. The product decarboxylates to 4-methyl-2 oxopentanoate. The protein is 3-isopropylmalate dehydrogenase (leuB) of Thermotoga maritima (strain ATCC 43589 / DSM 3109 / JCM 10099 / NBRC 100826 / MSB8).